The following is a 372-amino-acid chain: Glutamate 5-kinase (372 aa).

Lys14 is an ATP binding site. 3 residues coordinate substrate: Ser54, Asp141, and Asn153. Residue 173–174 (TD) participates in ATP binding. A PUA domain is found at 280-358 (RGHVVIDDGA…GEIESVLGYM (79 aa)).

Belongs to the glutamate 5-kinase family.

Its subcellular location is the cytoplasm. It catalyses the reaction L-glutamate + ATP = L-glutamyl 5-phosphate + ADP. Its pathway is amino-acid biosynthesis; L-proline biosynthesis; L-glutamate 5-semialdehyde from L-glutamate: step 1/2. Its function is as follows. Catalyzes the transfer of a phosphate group to glutamate to form L-glutamate 5-phosphate. The chain is Glutamate 5-kinase from Paraburkholderia phytofirmans (strain DSM 17436 / LMG 22146 / PsJN) (Burkholderia phytofirmans).